Reading from the N-terminus, the 146-residue chain is Hemoglobin subunit beta-2 (146 aa).

One can recognise a Globin domain in the interval 2–146; that stretch reads EWTNFERATI…VVSSLGKQYH (145 aa). Residues histidine 63 and histidine 92 each contribute to the heme b site.

It belongs to the globin family. In terms of assembly, hb2 is a heterotetramer of two alpha chains and two beta-2 chains. As to expression, red blood cells.

Functionally, involved in oxygen transport from gills to the various peripheral tissues. This Cygnodraco mawsoni (Antarctic dragonfish) protein is Hemoglobin subunit beta-2 (hbb2).